Consider the following 779-residue polypeptide: Probable ATP-dependent RNA helicase DHX40 (779 aa).

The tract at residues 1–28 is disordered; it reads MSRFPAVAGRAPRRQEEGERSRDLQEER. Positions 13–28 are enriched in basic and acidic residues; it reads RRQEEGERSRDLQEER. The Helicase ATP-binding domain occupies 63–231; that stretch reads IQAVRDNSFL…FGNCPIFDIP (169 aa). ATP is bound at residue 76 to 83; it reads GNTGSGKT. Positions 173 to 176 match the DEAH box motif; it reads DEAH. In terms of domain architecture, Helicase C-terminal spans 263–442; that stretch reads TMDIHLNEMA…SVVLTLKCLA (180 aa). Residues 737–779 form a disordered region; sequence SKDVLKKMQRRNDDKSISDARARFLERKQQRTQDHSDTRKETG.

The protein belongs to the DEAD box helicase family. DEAH subfamily. As to expression, ubiquitously expressed.

It carries out the reaction ATP + H2O = ADP + phosphate + H(+). Functionally, probable ATP-dependent RNA helicase. This Homo sapiens (Human) protein is Probable ATP-dependent RNA helicase DHX40 (DHX40).